Consider the following 1001-residue polypeptide: Phosphoenolpyruvate carboxylase (1001 aa).

Catalysis depends on residues H189 and K642.

Belongs to the PEPCase type 1 family. It depends on Mg(2+) as a cofactor.

The catalysed reaction is oxaloacetate + phosphate = phosphoenolpyruvate + hydrogencarbonate. In terms of biological role, forms oxaloacetate, a four-carbon dicarboxylic acid source for the tricarboxylic acid cycle. The polypeptide is Phosphoenolpyruvate carboxylase (Prochlorococcus marinus (strain SARG / CCMP1375 / SS120)).